Here is a 356-residue protein sequence, read N- to C-terminus: Protein-glutamate methylesterase/protein-glutamine glutaminase 2 (356 aa).

In terms of domain architecture, Response regulatory spans 4 to 121; it reads RALVVDDSAL…SQSMPEMAEE (118 aa). The residue at position 55 (Asp-55) is a 4-aspartylphosphate. In terms of domain architecture, CheB-type methylesterase spans 161 to 356; that stretch reads KAAPRNILAI…MAEEIIRIIG (196 aa). Active-site residues include Ser-173, His-200, and Asp-300.

The protein belongs to the CheB family. Phosphorylated by CheA. Phosphorylation of the N-terminal regulatory domain activates the methylesterase activity.

The protein localises to the cytoplasm. The catalysed reaction is [protein]-L-glutamate 5-O-methyl ester + H2O = L-glutamyl-[protein] + methanol + H(+). The enzyme catalyses L-glutaminyl-[protein] + H2O = L-glutamyl-[protein] + NH4(+). Its function is as follows. Involved in chemotaxis. Part of a chemotaxis signal transduction system that modulates chemotaxis in response to various stimuli. Catalyzes the demethylation of specific methylglutamate residues introduced into the chemoreceptors (methyl-accepting chemotaxis proteins or MCP) by CheR. Also mediates the irreversible deamidation of specific glutamine residues to glutamic acid. The polypeptide is Protein-glutamate methylesterase/protein-glutamine glutaminase 2 (Methanosarcina acetivorans (strain ATCC 35395 / DSM 2834 / JCM 12185 / C2A)).